We begin with the raw amino-acid sequence, 356 residues long: Probable D-xylulose reductase A (356 aa).

Residues Cys45, His70, and Glu71 each contribute to the Zn(2+) site. An NAD(+)-binding site is contributed by 180-185 (GAGPVG).

The protein belongs to the zinc-containing alcohol dehydrogenase family. Zn(2+) is required as a cofactor.

The catalysed reaction is xylitol + NAD(+) = D-xylulose + NADH + H(+). The protein operates within carbohydrate degradation; L-arabinose degradation via L-arabinitol; D-xylulose 5-phosphate from L-arabinose (fungal route): step 4/5. Functionally, xylitol dehydrogenase which catalyzes the conversion of xylitol to D-xylulose. Xylose is a major component of hemicelluloses such as xylan. Most fungi utilize D-xylose via three enzymatic reactions, xylose reductase (XR), xylitol dehydrogenase (XDH), and xylulokinase, to form xylulose 5-phosphate, which enters pentose phosphate pathway. This Arthroderma otae (strain ATCC MYA-4605 / CBS 113480) (Microsporum canis) protein is Probable D-xylulose reductase A (xdhA).